Reading from the N-terminus, the 1015-residue chain is DExH-box ATP-dependent RNA helicase DExH8 (1015 aa).

The 162-residue stretch at 36–197 (IDKILENRVT…FKELGRGERV (162 aa)) folds into the Helicase ATP-binding domain. 49–56 (GEPGCGKS) is an ATP binding site. Residues 144-147 (DEVH) carry the DEVH box motif. The Helicase C-terminal domain occupies 254-419 (LIHDLILYIH…KLSLRQQVLH (166 aa)). C3H1-type zinc fingers lie at residues 727–753 (YGEAPVCVYFLNGYCNRGGQCTFTHTL) and 754–782 (QSTRPACKFFASSQGCRNGESCLFSHAMR).

It belongs to the DExH box helicase family.

It catalyses the reaction ATP + H2O = ADP + phosphate + H(+). This chain is DExH-box ATP-dependent RNA helicase DExH8, found in Arabidopsis thaliana (Mouse-ear cress).